Reading from the N-terminus, the 412-residue chain is Solute carrier family 22 member 18 (412 aa).

The next 10 membrane-spanning stretches (helical) occupy residues 16 to 36, 51 to 71, 117 to 137, 148 to 168, 176 to 196, 232 to 252, 264 to 284, 294 to 314, 316 to 336, and 380 to 400; these read GIII…FMQF, VSFG…GPVF, LPAA…DLTA, LGLC…TLST, AFLA…CIPV, FLVK…FSII, AGYL…LVIG, ALLR…ALMS, VFHF…LNIV, and GVSI…LVLW.

This sequence belongs to the major facilitator (TC 2.A.1) superfamily. Organic cation transporter (TC 2.A.1.19) family.

Its subcellular location is the apical cell membrane. May act as a transporter of organic cations based on a proton efflux antiport mechanism. May play a role in the transport of chloroquine and quinidine-related compounds in kidney. Plays a role in the regulation of lipid metabolism. The sequence is that of Solute carrier family 22 member 18 (Slc67a1) from Rattus norvegicus (Rat).